A 230-amino-acid polypeptide reads, in one-letter code: MKEERPIIALDFSSFEETKAFLDLFPAEEKLYVKIGMELYYAQGPDIVRSIKSLGHNVFLDLKLHDIPNTVRAAMAVLKELDIDMATVHAAGGVEMLKAAREGLGQGPTLIAVTQLTSTSEDQMRGDQNIQTSLLESVLHYSKGAAKAQLDGVVCSAQEVEAIKAVTPTGFTCLTPGIRPKGSNIGDQKRVMTPNQARRIGSDYIVVGRPITQAKDPVAAYQAIKAEWAG.

Residues D11, K34, 61-70 (DLKLHDIPNT), T117, R179, Q188, G208, and R209 each bind substrate. K63 (proton donor) is an active-site residue.

Belongs to the OMP decarboxylase family. Type 1 subfamily. In terms of assembly, homodimer.

The catalysed reaction is orotidine 5'-phosphate + H(+) = UMP + CO2. The protein operates within pyrimidine metabolism; UMP biosynthesis via de novo pathway; UMP from orotate: step 2/2. Catalyzes the decarboxylation of orotidine 5'-monophosphate (OMP) to uridine 5'-monophosphate (UMP). This Streptococcus pyogenes serotype M28 (strain MGAS6180) protein is Orotidine 5'-phosphate decarboxylase.